The following is a 226-amino-acid chain: Phosphoglycolate phosphatase (226 aa).

The active-site Nucleophile is aspartate 12. Mg(2+) contacts are provided by aspartate 12, aspartate 14, and aspartate 177.

The protein belongs to the HAD-like hydrolase superfamily. CbbY/CbbZ/Gph/YieH family. Mg(2+) serves as cofactor.

It catalyses the reaction 2-phosphoglycolate + H2O = glycolate + phosphate. It participates in organic acid metabolism; glycolate biosynthesis; glycolate from 2-phosphoglycolate: step 1/1. Specifically catalyzes the dephosphorylation of 2-phosphoglycolate. Is involved in the dissimilation of the intracellular 2-phosphoglycolate formed during the DNA repair of 3'-phosphoglycolate ends, a major class of DNA lesions induced by oxidative stress. This chain is Phosphoglycolate phosphatase, found in Colwellia psychrerythraea (strain 34H / ATCC BAA-681) (Vibrio psychroerythus).